The following is a 238-amino-acid chain: Ribitol-5-phosphate cytidylyltransferase 2 (238 aa).

Residues 7-10 (LAGG) and 81-87 (GTDRNET) each bind CTP.

The protein belongs to the IspD/TarI cytidylyltransferase family. TarI subfamily.

The enzyme catalyses D-ribitol 5-phosphate + CTP + H(+) = CDP-L-ribitol + diphosphate. The protein operates within cell wall biogenesis; poly(ribitol phosphate) teichoic acid biosynthesis. Functionally, catalyzes the transfer of the cytidylyl group of CTP to D-ribitol 5-phosphate. In Staphylococcus aureus (strain MRSA252), this protein is Ribitol-5-phosphate cytidylyltransferase 2.